The following is a 169-amino-acid chain: 3-hydroxyanthranilate 3,4-dioxygenase (169 aa).

An O2-binding site is contributed by arginine 44. Fe cation is bound by residues histidine 48, glutamate 54, and histidine 92. Glutamate 54 provides a ligand contact to substrate. Arginine 96 and glutamate 106 together coordinate substrate. Positions 121, 124, 158, and 160 each coordinate a divalent metal cation.

This sequence belongs to the 3-HAO family. Fe(2+) serves as cofactor.

The protein resides in the cytoplasm. The catalysed reaction is 3-hydroxyanthranilate + O2 = (2Z,4Z)-2-amino-3-carboxymuconate 6-semialdehyde. Its pathway is cofactor biosynthesis; NAD(+) biosynthesis; quinolinate from L-kynurenine: step 3/3. In terms of biological role, catalyzes the oxidative ring opening of 3-hydroxyanthranilate to 2-amino-3-carboxymuconate semialdehyde, which spontaneously cyclizes to quinolinate. This Meyerozyma guilliermondii (strain ATCC 6260 / CBS 566 / DSM 6381 / JCM 1539 / NBRC 10279 / NRRL Y-324) (Yeast) protein is 3-hydroxyanthranilate 3,4-dioxygenase.